The sequence spans 352 residues: C-C chemokine receptor type 5 (352 aa).

Over 1-30 (MDYQVSSPTYDIDYNTSEPCQKINVKQIAA) the chain is Extracellular. Tyr-3 is subject to Sulfotyrosine. O-linked (GalNAc...) serine glycosylation is found at Ser-6 and Ser-7. Sulfotyrosine occurs at positions 10 and 14. Disulfide bonds link Cys-20-Cys-269 and Cys-101-Cys-178. Residues 31 to 58 (RLLPLLYSLVFIFGFVGNILVVLILINC) form a helical membrane-spanning segment. Residues 59-68 (KRLKSMTDIY) are Cytoplasmic-facing. The chain crosses the membrane as a helical span at residues 69 to 89 (LLNLAISDLLFLLTVPFWAHY). The Extracellular segment spans residues 90–102 (AAAQWDFGNTMCQ). Residues 103–124 (LLTGLYFIGFFSGIFFIILLTI) form a helical membrane-spanning segment. At 125 to 141 (DRYLAIVHAVFALKART) the chain is on the cytoplasmic side. The chain crosses the membrane as a helical span at residues 142 to 166 (VTFGVVTSVITWVVAVFASLPRIIF). At 167–198 (TRSQREGLHYTCSSHFPYSQYQFWKNFQTLKI) the chain is on the extracellular side. The chain crosses the membrane as a helical span at residues 199-218 (VILGLVLPLLVMVICYSGIL). At 219-235 (KTLLRCRNEKKRHRAVR) the chain is on the cytoplasmic side. A helical transmembrane segment spans residues 236–260 (LIFTIMIVYFLFWAPYNIVLLLNTF). Over 261-277 (QEFFGLNNCSSSNRLDQ) the chain is Extracellular. Residues 278-301 (AMQVTETLGMTHCCINPIIYAFVG) form a helical membrane-spanning segment. Residues 302 to 352 (EKFRNYLLVFFQKHIAKRFCKCCSIFQQEAPERASSVYTRSTGEQEISVGL) lie on the Cytoplasmic side of the membrane. 3 S-palmitoyl cysteine lipidation sites follow: Cys-321, Cys-323, and Cys-324. Residues Ser-336, Ser-337, Ser-342, and Ser-349 each carry the phosphoserine; by BARK1 modification.

It belongs to the G-protein coupled receptor 1 family. Interacts with PRAF2. Efficient ligand binding to CCL3/MIP-1alpha and CCL4/MIP-1beta requires sulfation, O-glycosylation and sialic acid modifications. Glycosylation on Ser-6 is required for efficient binding of CCL4. Interacts with GRK2. Interacts with ARRB1 and ARRB2. Interacts with CNIH4. Interacts with S100A4; this interaction stimulates T-lymphocyte chemotaxis. Sulfated on at least 2 of the N-terminal tyrosines. Sulfation is required for efficient binding of the chemokines, CCL3 and CCL4. Post-translationally, palmitoylation in the C-terminal is important for cell surface expression. In terms of processing, phosphorylation on serine residues in the C-terminal is stimulated by binding CC chemokines especially by APO-RANTES. O-glycosylated, but not N-glycosylated. Ser-6 appears to be the major site even if Ser-7 may be also O-glycosylated. Also sialylated glycans present which contribute to chemokine binding. Thr-16 and Ser-17 may also be glycosylated and, if so, with small moieties such as a T-antigen.

The protein localises to the cell membrane. Receptor for a number of inflammatory CC-chemokines including CCL3/MIP-1-alpha, CCL4/MIP-1-beta and RANTES and subsequently transduces a signal by increasing the intracellular calcium ion level. May play a role in the control of granulocytic lineage proliferation or differentiation. Participates in T-lymphocyte migration to the infection site by acting as a chemotactic receptor. The polypeptide is C-C chemokine receptor type 5 (CCR5) (Cercopithecus cephus (Moustached monkey)).